Reading from the N-terminus, the 328-residue chain is Phosphate acetyltransferase (328 aa).

It belongs to the phosphate acetyltransferase and butyryltransferase family.

Its subcellular location is the cytoplasm. It catalyses the reaction acetyl-CoA + phosphate = acetyl phosphate + CoA. The protein operates within metabolic intermediate biosynthesis; acetyl-CoA biosynthesis; acetyl-CoA from acetate: step 2/2. The polypeptide is Phosphate acetyltransferase (pta) (Staphylococcus aureus (strain MSSA476)).